The primary structure comprises 317 residues: Putative AP2/ERF and B3 domain-containing protein Os01g0140700 (317 aa).

A disordered region spans residues 1-37; the sequence is MEQEAAMVVFSCNSGSGGSSSTTDSKQEEEEEEELAA. Over residues 27–37 the composition is skewed to acidic residues; that stretch reads QEEEEEEELAA. A DNA-binding region (AP2/ERF) is located at residues 66 to 121; it reads RYKGVVPQPNGRWGAQIYERHARVWLGTFPDEEAAARAYDVAALRFRGRDAVTNRA. A DNA-binding region (TF-B3) is located at residues 178-287; it reads FEKAVTPSDV…EKHLLIDCKK (110 aa).

The protein resides in the nucleus. The sequence is that of Putative AP2/ERF and B3 domain-containing protein Os01g0140700 from Oryza sativa subsp. japonica (Rice).